Consider the following 87-residue polypeptide: Putative defensin-like protein 235 (87 aa).

The N-terminal stretch at 1-26 (MRSATFFLVSCVLMSFVLSHVKEVEA) is a signal peptide. 3 disulfides stabilise this stretch: Cys46/Cys73, Cys54/Cys82, and Cys71/Cys84.

Belongs to the DEFL family.

It is found in the secreted. The chain is Putative defensin-like protein 235 (SCRL26) from Arabidopsis thaliana (Mouse-ear cress).